Consider the following 483-residue polypeptide: Glutamyl-tRNA(Gln) amidotransferase subunit A (483 aa).

Active-site charge relay system residues include lysine 75 and serine 150. Serine 174 serves as the catalytic Acyl-ester intermediate.

The protein belongs to the amidase family. GatA subfamily. As to quaternary structure, heterotrimer of A, B and C subunits.

The enzyme catalyses L-glutamyl-tRNA(Gln) + L-glutamine + ATP + H2O = L-glutaminyl-tRNA(Gln) + L-glutamate + ADP + phosphate + H(+). Functionally, allows the formation of correctly charged Gln-tRNA(Gln) through the transamidation of misacylated Glu-tRNA(Gln) in organisms which lack glutaminyl-tRNA synthetase. The reaction takes place in the presence of glutamine and ATP through an activated gamma-phospho-Glu-tRNA(Gln). This Deinococcus geothermalis (strain DSM 11300 / CIP 105573 / AG-3a) protein is Glutamyl-tRNA(Gln) amidotransferase subunit A.